Here is a 494-residue protein sequence, read N- to C-terminus: MQKKYVVALDQGTTSSRAIVFDHDANIVSVSQREFTQLYPNPGWVEHDPMEIWASQSSVLIESLARAGIHSDEVAAIGITNQRETTIIWEKATGKPVYNAIVWQCRRSSEICEQLKAQGLEDYVRENTGLLLDPYFSGTKIKWILDNVPDARAKAKRGELLFGTVDTWLLWKLTEGKVHVTDPTNAARTLLFNIHSLSWDTTLLEALDIPAAMLPEVRPSCSVYGTTRIAGEGSEIPLAGIAGDQQAALFGQLCVEPGMAKNTYGTGCFLLMNTGNKAVRSSHGLLTTVAVGAQGEVNYALEGSVFMGGATIQWLRDELGLIRDASDTEYFASKVADTNGVYLVPAFVGLGAPYWDPNARGALFGLTRGANRNHIIRAALESIAYQSKDLLDAMIKDSGERLKSLKVDGGAVANDFLMQFQADITDVEVLRPSVCETTALGAAFLAGLAVGFWTSVTELEYKACIDKHFKPNIDASQRERLYVGWQDAVVRTRS.

Thr-13 is an ADP binding site. Residues Thr-13, Thr-14, and Ser-15 each coordinate ATP. Thr-13 is a binding site for sn-glycerol 3-phosphate. Residue Arg-17 coordinates ADP. 4 residues coordinate sn-glycerol 3-phosphate: Arg-83, Glu-84, Tyr-135, and Asp-244. Glycerol is bound by residues Arg-83, Glu-84, Tyr-135, Asp-244, and Gln-245. Thr-266 and Gly-309 together coordinate ADP. The ATP site is built by Thr-266, Gly-309, Gln-313, and Gly-410. Gly-410 and Asn-414 together coordinate ADP.

This sequence belongs to the FGGY kinase family.

The catalysed reaction is glycerol + ATP = sn-glycerol 3-phosphate + ADP + H(+). The protein operates within polyol metabolism; glycerol degradation via glycerol kinase pathway; sn-glycerol 3-phosphate from glycerol: step 1/1. With respect to regulation, inhibited by fructose 1,6-bisphosphate (FBP). Its function is as follows. Key enzyme in the regulation of glycerol uptake and metabolism. Catalyzes the phosphorylation of glycerol to yield sn-glycerol 3-phosphate. This Shewanella sp. (strain MR-4) protein is Glycerol kinase.